The primary structure comprises 382 residues: MAP kinase-activated protein kinase 3 (382 aa).

Methionine 1 carries the N-acetylmethionine modification. The interval 1 to 34 (MDGETAEEQGGPVPPPVAPGGPGLGGAPGGRREP) is disordered. Residues 20-29 (GGPGLGGAPG) show a composition bias toward gly residues. Residues 44 to 304 (QLSKQVLGLG…ITQFMNHPWI (261 aa)) form the Protein kinase domain. Residues 50–58 (LGLGVNGKV) and lysine 73 contribute to the ATP site. Residue aspartate 166 is the Proton acceptor of the active site. Phosphothreonine; by MAPK14 is present on threonine 201. Serine 251 is modified (phosphoserine; by MAPK14). Serine 307 bears the Phosphoserine; by autocatalysis mark. The autoinhibitory helix stretch occupies residues 307–343 (SMVVPQTPLHTARVLQEDKDHWDEVKEEMTSALATMR). Threonine 313 carries the post-translational modification Phosphothreonine; by MAPK14. The Nuclear export signal (NES) signature appears at 335–344 (MTSALATMRV). Positions 345–369 (DYDQVKIKDLKTSNNRLLNKRRKKQ) are p38 MAPK-binding site. Short sequence motifs (bipartite nuclear localization signal) lie at residues 350–353 (KIKD) and 364–368 (KRRKK). A disordered region spans residues 357–382 (SNNRLLNKRRKKQAGSSSASQGCNNQ). The span at 370-382 (AGSSSASQGCNNQ) shows a compositional bias: polar residues.

This sequence belongs to the protein kinase superfamily. CAMK Ser/Thr protein kinase family. In terms of assembly, heterodimer with p38-alpha/MAPK14. The heterodimer with p38-alpha/MAPK14 forms a stable complex: molecules are positioned 'face to face' so that the ATP-binding sites of both kinases are at the heterodimer interface. Interacts with TCF3 and with polycomb proteins, such as PCH2 and BMI1/PCGF4. In terms of processing, phosphorylated and activated by MAPK1/ERK2 and MAPK3/ERK1. Phosphorylated and activated by MAP kinase p38-alpha/MAPK14 at Thr-201, Ser-251 and Thr-313. Widely expressed, with a higher expression level observed in heart and skeletal muscle. No expression in brain. Expressed in the retinal pigment epithelium.

Its subcellular location is the nucleus. It is found in the cytoplasm. It carries out the reaction L-seryl-[protein] + ATP = O-phospho-L-seryl-[protein] + ADP + H(+). The enzyme catalyses L-threonyl-[protein] + ATP = O-phospho-L-threonyl-[protein] + ADP + H(+). With respect to regulation, activated following phosphorylation by p38-alpha/MAPK14 following various stresses. Inhibited by ligand 5B (2'-[2-(1,3-benzodioxol-5-yl)pyrimidin-4-yl]-5',6'-dihydrospiro[piperidine-4,7'-pyrrolo[3,2-c]pyridin]- 4'(1'h)-one) and ligand P4O (2-[2-(2-fluorophenyl)pyridin-4-yl]-1,5,6,7-tetrahydro- 4h-pyrrolo[3,2-c]pyridin-4-one), 2 ATP-competitive inhibitors. Its function is as follows. Stress-activated serine/threonine-protein kinase involved in cytokines production, endocytosis, cell migration, chromatin remodeling and transcriptional regulation. Following stress, it is phosphorylated and activated by MAP kinase p38-alpha/MAPK14, leading to phosphorylation of substrates. Phosphorylates serine in the peptide sequence, Hyd-X-R-X(2)-S, where Hyd is a large hydrophobic residue. MAPKAPK2 and MAPKAPK3, share the same function and substrate specificity, but MAPKAPK3 kinase activity and level in protein expression are lower compared to MAPKAPK2. Phosphorylates HSP27/HSPB1, KRT18, KRT20, RCSD1, RPS6KA3, TAB3 and TTP/ZFP36. Mediates phosphorylation of HSP27/HSPB1 in response to stress, leading to dissociate HSP27/HSPB1 from large small heat-shock protein (sHsps) oligomers and impair their chaperone activities and ability to protect against oxidative stress effectively. Involved in inflammatory response by regulating tumor necrosis factor (TNF) and IL6 production post-transcriptionally: acts by phosphorylating AU-rich elements (AREs)-binding proteins, such as TTP/ZFP36, leading to regulate the stability and translation of TNF and IL6 mRNAs. Phosphorylation of TTP/ZFP36, a major post-transcriptional regulator of TNF, promotes its binding to 14-3-3 proteins and reduces its ARE mRNA affinity leading to inhibition of dependent degradation of ARE-containing transcript. Involved in toll-like receptor signaling pathway (TLR) in dendritic cells: required for acute TLR-induced macropinocytosis by phosphorylating and activating RPS6KA3. Also acts as a modulator of Polycomb-mediated repression. The chain is MAP kinase-activated protein kinase 3 (MAPKAPK3) from Homo sapiens (Human).